Here is a 300-residue protein sequence, read N- to C-terminus: MSNEDTYKRLVVVTGMSGAGKSVAIQCLEDLGYFCVDNLPPILLPKFIELMNNNTESLSRVAIGIDLRGKDFFNSLQEEIQNIINLNEVLVQVLFVEASDHILVSRYKETRRTHPLQDNISLIDAIQEERKLLADLRGVATHIIDSSESKPKALRSKVIEIFGSGKDNIFTINVMSFGFKHGLPIDADIVFDVRFLPNPYYIEEMRKLTGLDPLVYDYVMKWKETEMFYQKLIDLLKFVIPGYMREGKSQVVIAIGCTGGQHRSVALSERISNELKDFFDFELHTRHRDALIEGTINEKA.

Residue 15-22 (GMSGAGKS) coordinates ATP. 66 to 69 (DLRG) contacts GTP.

This sequence belongs to the RapZ-like family.

Displays ATPase and GTPase activities. This Macrococcus caseolyticus (strain JCSC5402) (Macrococcoides caseolyticum) protein is Nucleotide-binding protein MCCL_0516.